Consider the following 648-residue polypeptide: Chaperone protein DnaK (648 aa).

T200 is subject to Phosphothreonine; by autocatalysis. The tract at residues 612–631 is disordered; it reads QAGAAGAAGAAEGAAQGGAQ.

The protein belongs to the heat shock protein 70 family.

Its function is as follows. Acts as a chaperone. The chain is Chaperone protein DnaK from Burkholderia multivorans (strain ATCC 17616 / 249).